The following is a 117-amino-acid chain: Large ribosomal subunit protein bL20c (117 aa).

This sequence belongs to the bacterial ribosomal protein bL20 family.

It is found in the plastid. The protein localises to the chloroplast. Binds directly to 23S ribosomal RNA and is necessary for the in vitro assembly process of the 50S ribosomal subunit. It is not involved in the protein synthesizing functions of that subunit. This Manihot esculenta (Cassava) protein is Large ribosomal subunit protein bL20c.